Reading from the N-terminus, the 195-residue chain is Protein GrpE (195 aa).

Belongs to the GrpE family. In terms of assembly, homodimer.

Its subcellular location is the cytoplasm. Functionally, participates actively in the response to hyperosmotic and heat shock by preventing the aggregation of stress-denatured proteins, in association with DnaK and GrpE. It is the nucleotide exchange factor for DnaK and may function as a thermosensor. Unfolded proteins bind initially to DnaJ; upon interaction with the DnaJ-bound protein, DnaK hydrolyzes its bound ATP, resulting in the formation of a stable complex. GrpE releases ADP from DnaK; ATP binding to DnaK triggers the release of the substrate protein, thus completing the reaction cycle. Several rounds of ATP-dependent interactions between DnaJ, DnaK and GrpE are required for fully efficient folding. The chain is Protein GrpE from Francisella tularensis subsp. tularensis (strain FSC 198).